The following is a 100-amino-acid chain: MIEMFTQIFIISALVIFGMALLVCLVRLIKGPTTADRVVSFDASSAVVMSIVGVMSVIFNSVSYLDSIMLIAIISFVSSVSISRFIGEGRVFNGNHKRHR.

3 helical membrane-spanning segments follow: residues 5 to 25, 38 to 60, and 65 to 87; these read FTQI…LVCL, VVSF…VIFN, and LDSI…RFIG.

This sequence belongs to the CPA3 antiporters (TC 2.A.63) subunit F family. In terms of assembly, may form a heterooligomeric complex that consists of seven subunits: mnhA2, mnhB2, mnhC2, mnhD2, mnhE2, mnhF2 and mnhG2.

It localises to the cell membrane. This chain is Putative antiporter subunit mnhF2 (mnhF2), found in Staphylococcus epidermidis (strain ATCC 35984 / DSM 28319 / BCRC 17069 / CCUG 31568 / BM 3577 / RP62A).